The sequence spans 398 residues: Phytoene synthase 2, chloroplastic (398 aa).

The transit peptide at 1 to 80 directs the protein to the chloroplast; that stretch reads MASSSSAAAL…EEAVYEVVLR (80 aa).

This sequence belongs to the phytoene/squalene synthase family. In terms of tissue distribution, expressed in leaves and endosperm. Expressed in developing leaves.

It is found in the plastid. It localises to the chloroplast membrane. The protein localises to the chloroplast. The protein resides in the plastoglobule. It catalyses the reaction 2 (2E,6E,10E)-geranylgeranyl diphosphate = 15-cis-phytoene + 2 diphosphate. Its function is as follows. Catalyzes the conversion of geranylgeranyl diphosphate to phytoene. Mediates the first committed step in carotenoid biosynthesis. In Oryza sativa subsp. japonica (Rice), this protein is Phytoene synthase 2, chloroplastic.